Consider the following 513-residue polypeptide: Bifunctional purine biosynthesis protein PurH (513 aa).

Residues 1–145 (MNKRAIISVY…KNFKYTTVIV (145 aa)) form the MGS-like domain.

This sequence belongs to the PurH family.

It catalyses the reaction (6R)-10-formyltetrahydrofolate + 5-amino-1-(5-phospho-beta-D-ribosyl)imidazole-4-carboxamide = 5-formamido-1-(5-phospho-D-ribosyl)imidazole-4-carboxamide + (6S)-5,6,7,8-tetrahydrofolate. The enzyme catalyses IMP + H2O = 5-formamido-1-(5-phospho-D-ribosyl)imidazole-4-carboxamide. The protein operates within purine metabolism; IMP biosynthesis via de novo pathway; 5-formamido-1-(5-phospho-D-ribosyl)imidazole-4-carboxamide from 5-amino-1-(5-phospho-D-ribosyl)imidazole-4-carboxamide (10-formyl THF route): step 1/1. It functions in the pathway purine metabolism; IMP biosynthesis via de novo pathway; IMP from 5-formamido-1-(5-phospho-D-ribosyl)imidazole-4-carboxamide: step 1/1. The polypeptide is Bifunctional purine biosynthesis protein PurH (Caldicellulosiruptor bescii (strain ATCC BAA-1888 / DSM 6725 / KCTC 15123 / Z-1320) (Anaerocellum thermophilum)).